The chain runs to 277 residues: Ribosomally synthesized cyclic peptide asperipin-2a precursor aprA (277 aa).

The signal sequence occupies residues 1-19; the sequence is MHLSRYIAVLLSASSFVSA. 12 consecutive propeptides follow at residues 20–69, 76–88, 95–107, 114–126, 133–145, 152–164, 171–183, 190–202, 209–221, 228–240, 247–259, and 266–277; these read LPLQ…LDKR, KRNAETPEDLDKR, KRNAETPDDLDKR, and KRNAETPEDLDK.

In terms of processing, aprA is processed by kexin proteases to produce 11 identical copies of the hexapeptide Phe-Tyr-Tyr-Thr-Gly-Tyr, that is further modified aprY and aprR to yield asperipin-2a. The bicyclic structure of asperipin-2a is likely synthesized by the single ustYa family oxidase aprY. The reductase aprR may be required for the final reduction to yield asperipin-2a.

It participates in secondary metabolite biosynthesis. In terms of biological role, ribosomally synthesized cyclic peptide asperipin-2a precursor; part of the gene cluster that mediates the biosynthesis of the asperipin-2a, a bicyclic peptide that possesses two macrocyclic ether rings consisting of 14- and 17-membered paracyclophans. The aprA translated product contains a 11-fold repeated peptide embedding the hexapeptide Phe-Tyr-Tyr-Thr-Gly-Tyr, that is converted into asperipin-2a. After being excised from the precursor peptide by kexin proteases, the core peptides are cyclized and modified post-translationally by enzymes encoded within the corresponding gene cluster. The protein is Ribosomally synthesized cyclic peptide asperipin-2a precursor aprA of Aspergillus flavus (strain ATCC 200026 / FGSC A1120 / IAM 13836 / NRRL 3357 / JCM 12722 / SRRC 167).